A 106-amino-acid chain; its full sequence is UPF0145 protein APJL_0492 (106 aa).

This sequence belongs to the UPF0145 family.

The sequence is that of UPF0145 protein APJL_0492 from Actinobacillus pleuropneumoniae serotype 3 (strain JL03).